Consider the following 356-residue polypeptide: MLGKMILLPLFVLLCHSLASASLAYRGADISSLLIEEKAGIKYKDVNGQAQPLENILKANGVNSVRQRVWVNPSDGSYNLDYNVKLAKRVKAAGMSVYLDLHFSDTWADPSHQTTPRGWSTNDIGTLTWQVYNYTKEVCDTFASNGIDVSIVAIGNEIRNGLLWPLGKPNNYANIANILHSAAFGVKDSTLSPKPKIMIHLDNGWDWSAQKFFYDSVLSSGAKLVKSDFDLIGVSYYPFYNPSATLSALTTSLKNLRSTYGKDVLVVETDWPVSCPNPAYAFPSDLKDIPFSVAGQKTFVQRVANVVAQTPGGIGLYYWEPAWVQNAALGSSCADNLMVDWRTDQARTSLSVFGTI.

Residues 1–21 (MLGKMILLPLFVLLCHSLASA) form the signal peptide. N-linked (GlcNAc...) asparagine glycosylation occurs at Asn133. Glu157 functions as the Proton donor in the catalytic mechanism. Glu268 serves as the catalytic Nucleophile.

The protein belongs to the glycosyl hydrolase 53 family.

It localises to the secreted. The enzyme catalyses The enzyme specifically hydrolyzes (1-&gt;4)-beta-D-galactosidic linkages in type I arabinogalactans.. Functionally, endogalactanase involved in the degradation of plant cell wall polysaccharides, and more particularly of hairy regions of pectin. This chain is Probable arabinogalactan endo-beta-1,4-galactanase A (galA), found in Neosartorya fischeri (strain ATCC 1020 / DSM 3700 / CBS 544.65 / FGSC A1164 / JCM 1740 / NRRL 181 / WB 181) (Aspergillus fischerianus).